The following is a 106-amino-acid chain: UPF0213 protein KPN78578_35340 (106 aa).

One can recognise a GIY-YIG domain in the interval 13-88; sequence VCWFLYLIRT…KQLTKREKER (76 aa).

The protein belongs to the UPF0213 family.

The chain is UPF0213 protein KPN78578_35340 from Klebsiella pneumoniae subsp. pneumoniae (strain ATCC 700721 / MGH 78578).